A 242-amino-acid polypeptide reads, in one-letter code: Small ribosomal subunit protein uS2 (242 aa).

It belongs to the universal ribosomal protein uS2 family.

This Mannheimia succiniciproducens (strain KCTC 0769BP / MBEL55E) protein is Small ribosomal subunit protein uS2.